We begin with the raw amino-acid sequence, 185 residues long: Acireductone dioxygenase (185 aa).

A disordered region spans residues Met1–Leu22. The Fe(2+) site is built by His102, His104, Glu108, and His146. 4 residues coordinate Ni(2+): His102, His104, Glu108, and His146.

This sequence belongs to the acireductone dioxygenase (ARD) family. In terms of assembly, monomer. Fe(2+) serves as cofactor. The cofactor is Ni(2+).

The catalysed reaction is 1,2-dihydroxy-5-(methylsulfanyl)pent-1-en-3-one + O2 = 3-(methylsulfanyl)propanoate + CO + formate + 2 H(+). It carries out the reaction 1,2-dihydroxy-5-(methylsulfanyl)pent-1-en-3-one + O2 = 4-methylsulfanyl-2-oxobutanoate + formate + 2 H(+). The protein operates within amino-acid biosynthesis; L-methionine biosynthesis via salvage pathway; L-methionine from S-methyl-5-thio-alpha-D-ribose 1-phosphate: step 5/6. In terms of biological role, catalyzes 2 different reactions between oxygen and the acireductone 1,2-dihydroxy-3-keto-5-methylthiopentene (DHK-MTPene) depending upon the metal bound in the active site. Fe-containing acireductone dioxygenase (Fe-ARD) produces formate and 2-keto-4-methylthiobutyrate (KMTB), the alpha-ketoacid precursor of methionine in the methionine recycle pathway. Ni-containing acireductone dioxygenase (Ni-ARD) produces methylthiopropionate, carbon monoxide and formate, and does not lie on the methionine recycle pathway. In Prochlorococcus marinus (strain MIT 9313), this protein is Acireductone dioxygenase.